A 441-amino-acid polypeptide reads, in one-letter code: Hexane cyclase gkaB (441 aa).

The N-terminal stretch at 1–25 (MTKFLAGAAIVLAVAFGSFFSQSST) is a signal peptide. Asn77, Asn153, Asn184, and Asn308 each carry an N-linked (GlcNAc...) asparagine glycan.

It belongs to the Diels-Alderase family.

It functions in the pathway mycotoxin biosynthesis. In terms of biological role, hexane cyclase; part of the gene cluster that mediates the biosynthesis of GKK1032, fungal natural products containing a macrocyclic para-cyclophane connected to a decahydrofluorene ring system that show potent antitumor activities. Within the pathway, gkaB functions synergistically with gkaX and gkaZ to form the cyclophane. The pathway begins with the PKS-NRPS gkaA which, with the help of the trans-enoyl reductase gkaC, synthesizes the polyketide-tyrosyl acyl thioester product which can be reductively off-loaded by the terminal reductase (R) domain in gkaA. The alpha/beta hydrolase gkaG is then required to catalyze the subsequent Knoevenagel condensation that affords the 3-pyrrolin-2-one ring, whereas the three proteins gkaB, gkaX and gkaZ then function synergistically to form the cyclophane. This is Hexane cyclase gkaB from Penicillium citrinum.